The sequence spans 44 residues: Large ribosomal subunit protein bL34 (44 aa).

Belongs to the bacterial ribosomal protein bL34 family.

This is Large ribosomal subunit protein bL34 from Wolbachia pipientis wMel.